Consider the following 424-residue polypeptide: Vasopressin V1a receptor (424 aa).

The segment at 1–40 (MSFPRGSQDRSVGNSSPWWPLTTEGSNGSQEAARLGEGDS) is disordered. At 1–52 (MSFPRGSQDRSVGNSSPWWPLTTEGSNGSQEAARLGEGDSPLGDVRNEELAK) the chain is on the extracellular side. Over residues 9–30 (DRSVGNSSPWWPLTTEGSNGSQ) the composition is skewed to polar residues. A glycan (N-linked (GlcNAc...) asparagine) is linked at N27. The helical transmembrane segment at 53-76 (LEIAVLAVIFVVAVLGNSSVLLAL) threads the bilayer. Residues 77–88 (HRTPRKTSRMHL) are Cytoplasmic-facing. The chain crosses the membrane as a helical span at residues 89 to 110 (FIRHLSLADLAVAFFQVLPQLC). Residues 111 to 125 (WDITYRFRGPDWLCR) are Extracellular-facing. A disulfide bond links C124 and C205. A helical membrane pass occupies residues 126-147 (VVKHLQVFAMFASAYMLVVMTA). Topologically, residues 148-168 (DRYIAVCHPLKTLQQPARRSR) are cytoplasmic. A helical membrane pass occupies residues 169-190 (LMIATSWVLSFILSTPQYFIFS). Residues 191-220 (VIEIEVNNGTKTQDCWATFIQPWGTRAYVT) are Extracellular-facing. The helical transmembrane segment at 221–241 (WMTSGVFVAPVVVLGTCYGFI) threads the bilayer. Over 242–299 (CYHIWRNIRGKTASSRHSKGDKGSGEAVGPFHKGLLVTPCVSSVKSISRAKIRTVKMT) the chain is Cytoplasmic. Residues 300 to 319 (FVIVSAYILCWAPFFIVQMW) traverse the membrane as a helical segment. Topologically, residues 320 to 337 (SVWDENFIWTDSENPSIT) are extracellular. A helical transmembrane segment spans residues 338 to 357 (ITALLASLNSCCNPWIYMFF). Topologically, residues 358–424 (SGHLLQDCVQ…KSIRFIPVST (67 aa)) are cytoplasmic. S-palmitoyl cysteine attachment occurs at residues C371 and C372. Residues 383-416 (DSDSMSRRQTSYSNNRSPTNSTGMWKDSPKSSKS) form a disordered region. Residues 389–405 (RRQTSYSNNRSPTNSTG) are compositionally biased toward polar residues. Residue S410 is modified to Phosphoserine.

Belongs to the G-protein coupled receptor 1 family. Vasopressin/oxytocin receptor subfamily. Palmitoylated on three cysteine residues, of which only two are identified. As to expression, localized within gonadotropes of the anterior pituitary of the brain. Broadly distributed throughout the cerebral cortex.

The protein resides in the cell membrane. The protein localises to the cytoplasmic vesicle membrane. Functionally, receptor for arginine vasopressin. The activity of this receptor is mediated by G proteins which activate a phosphatidyl-inositol-calcium second messenger system. Involved in social memory formation. This is Vasopressin V1a receptor (Avpr1a) from Rattus norvegicus (Rat).